Reading from the N-terminus, the 681-residue chain is Kojibiose hydrolase (681 aa).

The N-terminal stretch at 1-23 (MKKYIFNHVFFFLMLCGSNYLYS) is a signal peptide. 11 residues coordinate beta-D-glucose: R74, W343, D344, W391, E392, T407, E472, W473, K538, Q539, and D573. The Proton donor role is filled by E472. E616 serves as the catalytic Proton acceptor.

The protein belongs to the glycosyl hydrolase 65 family. In terms of assembly, homohexamer; dimer of trimers.

It is found in the periplasm. The enzyme catalyses kojibiose + H2O = beta-D-glucose + D-glucose. Its function is as follows. Glycosidase that specifically hydrolyzes kojibiose to beta-glucose and glucose. Also hydrolyzes, with lower catalytic efficiency, longer kojioligosaccharides (from kojitriose to kojipentaose) and shorter oligosaccharides produced by the degradation of dextran-containing alpha-1,2 branches. Probably acts on alpha-(1-&gt;2)-glucosyl isomaltooligosaccharides. Shows weak activity with nigerose but has no activity toward p-nitrophenyl alpha-glucopyranoside, which is a general substrate of exo-acting alpha-glucoside hydrolases. Has a strict specificity for alpha-1,2-glucosidic linkages. Catalyzes the hydrolytic reaction via an anomer-inverting mechanism. The sequence is that of Kojibiose hydrolase from Flavobacterium johnsoniae (strain ATCC 17061 / DSM 2064 / JCM 8514 / BCRC 14874 / CCUG 350202 / NBRC 14942 / NCIMB 11054 / UW101) (Cytophaga johnsonae).